A 121-amino-acid chain; its full sequence is UPF0102 protein BHWA1_02005 (121 aa).

Belongs to the UPF0102 family.

The polypeptide is UPF0102 protein BHWA1_02005 (Brachyspira hyodysenteriae (strain ATCC 49526 / WA1)).